The primary structure comprises 258 residues: 5'-nucleotidase SurE (258 aa).

Aspartate 8, aspartate 9, serine 40, and asparagine 92 together coordinate a divalent metal cation.

This sequence belongs to the SurE nucleotidase family. A divalent metal cation is required as a cofactor.

Its subcellular location is the cytoplasm. It carries out the reaction a ribonucleoside 5'-phosphate + H2O = a ribonucleoside + phosphate. Functionally, nucleotidase that shows phosphatase activity on nucleoside 5'-monophosphates. This Brucella anthropi (strain ATCC 49188 / DSM 6882 / CCUG 24695 / JCM 21032 / LMG 3331 / NBRC 15819 / NCTC 12168 / Alc 37) (Ochrobactrum anthropi) protein is 5'-nucleotidase SurE.